The sequence spans 385 residues: Zinc finger protein B385R (385 aa).

A C2H2-type zinc finger spans residues 166 to 190 (LQCPNCGCIQELMGTIFDETHFYNH).

It belongs to the asfivirus B385R family.

This chain is Zinc finger protein B385R, found in Ornithodoros (relapsing fever ticks).